The following is a 282-amino-acid chain: Acetyl-coenzyme A carboxylase carboxyl transferase subunit beta (282 aa).

The 260-residue stretch at 23 to 282 folds into the CoA carboxyltransferase N-terminal domain; it reads IWTKCGQCDA…MLSKLHHQQA (260 aa). The Zn(2+) site is built by cysteine 27, cysteine 30, cysteine 46, and cysteine 49. A C4-type zinc finger spans residues 27–49; that stretch reads CGQCDAVLYKTELEKQLGVCPKC.

It belongs to the AccD/PCCB family. Acetyl-CoA carboxylase is a heterohexamer composed of biotin carboxyl carrier protein (AccB), biotin carboxylase (AccC) and two subunits each of ACCase subunit alpha (AccA) and ACCase subunit beta (AccD). It depends on Zn(2+) as a cofactor.

It localises to the cytoplasm. It catalyses the reaction N(6)-carboxybiotinyl-L-lysyl-[protein] + acetyl-CoA = N(6)-biotinyl-L-lysyl-[protein] + malonyl-CoA. It functions in the pathway lipid metabolism; malonyl-CoA biosynthesis; malonyl-CoA from acetyl-CoA: step 1/1. Component of the acetyl coenzyme A carboxylase (ACC) complex. Biotin carboxylase (BC) catalyzes the carboxylation of biotin on its carrier protein (BCCP) and then the CO(2) group is transferred by the transcarboxylase to acetyl-CoA to form malonyl-CoA. This is Acetyl-coenzyme A carboxylase carboxyl transferase subunit beta from Pseudoalteromonas atlantica (strain T6c / ATCC BAA-1087).